A 328-amino-acid chain; its full sequence is Cell division protein ZipA (328 aa).

Residues 1-4 (MDLN) are Periplasmic-facing. The chain crosses the membrane as a helical span at residues 5–25 (TILIIVGIVALVALIVHGLWS). The Cytoplasmic segment spans residues 26-328 (NRREKSKYFD…NAEQAYLARV (303 aa)). The tract at residues 43-82 (TSLTSRSHTQEEMAQPNNISPNTYVENGHTPIPQPTTEKV) is disordered. The span at 57–67 (QPNNISPNTYV) shows a compositional bias: polar residues.

The protein belongs to the ZipA family. Interacts with FtsZ via their C-terminal domains.

The protein resides in the cell inner membrane. Its function is as follows. Essential cell division protein that stabilizes the FtsZ protofilaments by cross-linking them and that serves as a cytoplasmic membrane anchor for the Z ring. Also required for the recruitment to the septal ring of downstream cell division proteins. The sequence is that of Cell division protein ZipA from Haemophilus influenzae (strain PittEE).